A 366-amino-acid polypeptide reads, in one-letter code: MAAKVASTSSEEAEGSLVTEGEMGEKALPVVYKRYICSFADCGAAYNKNWKLQAHLCKHTGEKPFPCKEEGCEKGFTSLHHLTRHSLTHTGEKNFTCDSDGCDLRFTTKANMKKHFNRFHNIKICVYVCHFENCGKAFKKHNQLKVHQFSHTQQLPYECPHEGCDKRFSLPSRLKRHEKVHAGYPCKKDDSCSFVGKTWTLYLKHVAECHQDLAVCDVCNRKFRHKDYLRDHQKTHEKERTVYLCPRDGCDRSYTTAFNLRSHIQSFHEEQRPFVCEHAGCGKCFAMKKSLERHSVVHDPEKRKLKEKCPRPKRSLASRLTGYIPPKSKEKNASVSGTEKTDSLVKNKPSGTETNGSLVLDKLTIQ.

C2H2-type zinc fingers lie at residues 35–59 (YICS…LCKH), 65–89 (FPCK…SLTH), 95–120 (FTCD…NRFH), 127–151 (YVCH…QFSH), 157–181 (YECP…EKVH), 184–210 (YPCK…AECH), 214–236 (AVCD…QKTH), 243–268 (YLCP…QSFH), and 274–298 (FVCE…SVVH). Residue Ser38 is modified to Phosphoserine; by CK2. Positions 299–310 (DPEKRKLKEKCP) are enriched in basic and acidic residues. The tract at residues 299-366 (DPEKRKLKEK…SLVLDKLTIQ (68 aa)) is disordered. Residue Ser336 is modified to Phosphoserine; by CK2; in vitro.

The N-terminus is blocked. Synthesized in oocytes and, in much lower levels, in somatic cells.

Its subcellular location is the nucleus. Its function is as follows. Involved in ribosomal large subunit biogenesis. Acts both as a positive transcription factor for 5S RNA genes, and as a specific RNA binding protein that complexes with 5S RNA in oocytes to form the 7S ribonucleoprotein storage particle. May play an essential role in the developmental change in 5S RNA gene expression. Interacts with the internal control region (ICR) of approximately 50 bases within the 5S RNA genes, is required for correct transcription of these genes by RNA polymerase III. Also binds the transcribed 5S RNA's. This chain is Transcription factor IIIA (gtf3a), found in Xenopus laevis (African clawed frog).